A 138-amino-acid polypeptide reads, in one-letter code: Phosphoribosyl-AMP cyclohydrolase (138 aa).

Position 92 (Asp-92) interacts with Mg(2+). Cys-93 is a Zn(2+) binding site. Mg(2+)-binding residues include Asp-94 and Asp-96. Positions 109 and 116 each coordinate Zn(2+).

The protein belongs to the PRA-CH family. As to quaternary structure, homodimer. Mg(2+) serves as cofactor. It depends on Zn(2+) as a cofactor.

It localises to the cytoplasm. It carries out the reaction 1-(5-phospho-beta-D-ribosyl)-5'-AMP + H2O = 1-(5-phospho-beta-D-ribosyl)-5-[(5-phospho-beta-D-ribosylamino)methylideneamino]imidazole-4-carboxamide. The protein operates within amino-acid biosynthesis; L-histidine biosynthesis; L-histidine from 5-phospho-alpha-D-ribose 1-diphosphate: step 3/9. In terms of biological role, catalyzes the hydrolysis of the adenine ring of phosphoribosyl-AMP. In Clavibacter sepedonicus (Clavibacter michiganensis subsp. sepedonicus), this protein is Phosphoribosyl-AMP cyclohydrolase.